The chain runs to 510 residues: Chromosomal replication initiator protein DnaA (510 aa).

Positions 1–107 are domain I, interacts with DnaA modulators; it reads MTNDPGSGFA…VRIAPPPADD (107 aa). A domain II region spans residues 107-169; sequence DDDDSVAAAV…ADTSASAGGT (63 aa). The segment at 119–168 is disordered; that stretch reads PGLEASPETSQEVSDEIDDFGENAPNSRQSWPTHFKKRSTDADTSASAGG. Positions 170–386 are domain III, AAA+ region; the sequence is SLNRRYTFDT…GALIRVTAFA (217 aa). 4 residues coordinate ATP: G214, G216, K217, and T218. The domain IV, binds dsDNA stretch occupies residues 387 to 510; sequence SLNKTPIDKA…TTRIRQRSKR (124 aa).

This sequence belongs to the DnaA family. As to quaternary structure, oligomerizes as a right-handed, spiral filament on DNA at oriC.

It is found in the cytoplasm. In terms of biological role, plays an essential role in the initiation and regulation of chromosomal replication. ATP-DnaA binds to the origin of replication (oriC) to initiate formation of the DNA replication initiation complex once per cell cycle. Binds the DnaA box (a 9 base pair repeat at the origin) and separates the double-stranded (ds)DNA. Forms a right-handed helical filament on oriC DNA; dsDNA binds to the exterior of the filament while single-stranded (ss)DNA is stabiized in the filament's interior. The ATP-DnaA-oriC complex binds and stabilizes one strand of the AT-rich DNA unwinding element (DUE), permitting loading of DNA polymerase. After initiation quickly degrades to an ADP-DnaA complex that is not apt for DNA replication. Binds acidic phospholipids. The protein is Chromosomal replication initiator protein DnaA of Mycobacterium marinum (strain ATCC BAA-535 / M).